The primary structure comprises 750 residues: Protein O-mannosyl-transferase 2 (750 aa).

Residues 1 to 23 (MPPATGGGLAESELRPRRGRCGP) are disordered. A Phosphoserine modification is found at Ser41. A helical membrane pass occupies residues 54–74 (AVGWWALLALVTLLSFATRFH). N-linked (GlcNAc...) asparagine glycosylation occurs at Asn98. The next 5 helical transmembrane spans lie at 100 to 120 (TFFFDVHPPLGKMLIGLAGYL), 146 to 166 (GFCAFLGSWLVPFAYLTVLDL), 191 to 211 (QYILLDPILMFFIMAAMLSMV), 231 to 251 (LTGVSLAGALGVKFVGLFIIL), and 283 to 303 (VLCLIVLPLALYTATFAVHFM). N-linked (GlcNAc...) asparagine glycosylation occurs at Asn330. MIR domains lie at 334-390 (PEHL…IKKH), 403-459 (VEFV…IEVV), and 464-521 (GNRI…VEDH). Asn445 carries an N-linked (GlcNAc...) asparagine glycan. N-linked (GlcNAc...) asparagine glycans are attached at residues Asn528 and Asn583. The next 4 helical transmembrane spans lie at 596–616 (VVWWLNLLSIALYLLSGSIIA), 643–663 (VLLGWTLHYFPFFLMGRVLYF), 665–685 (HYFPAMLFSSMLTGILWDTLL), and 700–720 (GIHVAGILSLLLGTAYSFYLF).

Belongs to the glycosyltransferase 39 family. Interacts with POMT1. N-glycosylated. As to expression, highly expressed in testis; detected at low levels in most tissues.

It is found in the endoplasmic reticulum membrane. The catalysed reaction is a di-trans,poly-cis-dolichyl beta-D-mannosyl phosphate + L-seryl-[protein] = 3-O-(alpha-D-mannosyl)-L-seryl-[protein] + a di-trans,poly-cis-dolichyl phosphate + H(+). It carries out the reaction a di-trans,poly-cis-dolichyl beta-D-mannosyl phosphate + L-threonyl-[protein] = 3-O-(alpha-D-mannosyl)-L-threonyl-[protein] + a di-trans,poly-cis-dolichyl phosphate + H(+). It functions in the pathway protein modification; protein glycosylation. Its activity is regulated as follows. Slightly activated by Mg(2+) and inhibited by both Ca(+) and Mn(2+). EDTA ha no effect on activity in vitro. Its function is as follows. Transfers mannosyl residues to the hydroxyl group of serine or threonine residues. Coexpression of both POMT1 and POMT2 is necessary for enzyme activity, expression of either POMT1 or POMT2 alone is insufficient. Essentially dedicated to O-mannosylation of alpha-DAG1 and few other proteins but not of cadherins and protocaherins. The protein is Protein O-mannosyl-transferase 2 (POMT2) of Homo sapiens (Human).